A 671-amino-acid polypeptide reads, in one-letter code: DNA ligase (671 aa).

Residues 32–36 (DAEYD), 81–82 (SL), and glutamate 113 contribute to the NAD(+) site. The active-site N6-AMP-lysine intermediate is lysine 115. The NAD(+) site is built by arginine 136, glutamate 173, lysine 290, and lysine 314. Residues cysteine 408, cysteine 411, cysteine 426, and cysteine 432 each coordinate Zn(2+). The BRCT domain occupies 593–671 (EIDSPFAGKT…ETEMLRLLGS (79 aa)).

It belongs to the NAD-dependent DNA ligase family. LigA subfamily. Requires Mg(2+) as cofactor. Mn(2+) serves as cofactor.

It catalyses the reaction NAD(+) + (deoxyribonucleotide)n-3'-hydroxyl + 5'-phospho-(deoxyribonucleotide)m = (deoxyribonucleotide)n+m + AMP + beta-nicotinamide D-nucleotide.. Its function is as follows. DNA ligase that catalyzes the formation of phosphodiester linkages between 5'-phosphoryl and 3'-hydroxyl groups in double-stranded DNA using NAD as a coenzyme and as the energy source for the reaction. It is essential for DNA replication and repair of damaged DNA. This chain is DNA ligase, found in Escherichia fergusonii (strain ATCC 35469 / DSM 13698 / CCUG 18766 / IAM 14443 / JCM 21226 / LMG 7866 / NBRC 102419 / NCTC 12128 / CDC 0568-73).